The chain runs to 374 residues: F-box/LRR-repeat protein 8 (374 aa).

One can recognise an F-box domain in the interval 2-48 (AEPGEQLPEEVLALIFRHLPLPDRAAAARVCRAWAAAATCSAVWHDT).

As to quaternary structure, directly interacts with SKP1 and CUL1.

Substrate-recognition component of the SCF (SKP1-CUL1-F-box protein)-type E3 ubiquitin ligase complex. In Bos taurus (Bovine), this protein is F-box/LRR-repeat protein 8 (FBXL8).